The primary structure comprises 30 residues: 80 kDa carcinoembryonic antigen-binding protein (30 aa).

Binds to carcinoembryonic antigen (CEA). The N-terminus is blocked.

The protein localises to the cell membrane. Functionally, may play a role in the development of hepatic metastases from colorectal cancers. This Rattus norvegicus (Rat) protein is 80 kDa carcinoembryonic antigen-binding protein.